Consider the following 1393-residue polypeptide: DNA-directed RNA polymerase subunit beta'' (1393 aa).

Residues C220, C291, C298, and C301 each contribute to the Zn(2+) site.

Belongs to the RNA polymerase beta' chain family. RpoC2 subfamily. In terms of assembly, in plastids the minimal PEP RNA polymerase catalytic core is composed of four subunits: alpha, beta, beta', and beta''. When a (nuclear-encoded) sigma factor is associated with the core the holoenzyme is formed, which can initiate transcription. The cofactor is Zn(2+).

It localises to the plastid. It is found in the chloroplast. The catalysed reaction is RNA(n) + a ribonucleoside 5'-triphosphate = RNA(n+1) + diphosphate. DNA-dependent RNA polymerase catalyzes the transcription of DNA into RNA using the four ribonucleoside triphosphates as substrates. In Gossypium hirsutum (Upland cotton), this protein is DNA-directed RNA polymerase subunit beta''.